The sequence spans 555 residues: Urocanate hydratase (555 aa).

Residues 52–53 (GG), Gln130, 176–178 (GMG), Glu196, Arg201, 242–243 (NA), 263–267 (QTSAH), 272–273 (YL), and Tyr321 contribute to the NAD(+) site. Residue Cys409 is part of the active site. NAD(+) is bound at residue Gly491.

It belongs to the urocanase family. The cofactor is NAD(+).

It is found in the cytoplasm. The catalysed reaction is 4-imidazolone-5-propanoate = trans-urocanate + H2O. It participates in amino-acid degradation; L-histidine degradation into L-glutamate; N-formimidoyl-L-glutamate from L-histidine: step 2/3. Its function is as follows. Catalyzes the conversion of urocanate to 4-imidazolone-5-propionate. This is Urocanate hydratase from Nocardioides sp. (strain ATCC BAA-499 / JS614).